Here is a 1061-residue protein sequence, read N- to C-terminus: TonB-dependent transporter Oar (1061 aa).

Residues 1 to 26 form the signal peptide; sequence MHLNRVLRETGVVVAAGLLYGSAAFA. The region spanning 121–243 is the TBDR plug domain; that stretch reads EIVGAPPTID…TGGVINAVTR (123 aa). A TBDR beta-barrel domain is found at 248 to 1061; the sequence is EFHGSVFANW…QVRFGIRYTF (814 aa). The tract at residues 701–722 is disordered; sequence RSLAEPGQGTATSCDPSSFESQ. Polar residues predominate over residues 709–722; the sequence is GTATSCDPSSFESQ.

This sequence belongs to the TonB-dependent receptor family. As to quaternary structure, interacts with TonB. Part of a transport system composed of the outer membrane transporter Oar, the trans-periplasmic binding protein TonB and the inner membrane proteins ExbB and ExbD.

The protein resides in the cell outer membrane. Its function is as follows. Required for secretion of the protease PopC across the bacterial outer membrane. Binds and probably transports PopC from the periplasm to the extracellular milieu. It derives its energy for transport by interacting with the trans-periplasmic membrane protein TonB. Required for cellular adhesion during fruiting body formation, a multicellular developmental program that is induced in response to starvation. In Myxococcus xanthus, this protein is TonB-dependent transporter Oar.